A 359-amino-acid chain; its full sequence is Probable dual-specificity RNA methyltransferase RlmN (359 aa).

E91 (proton acceptor) is an active-site residue. The 233-residue stretch at 97–329 (QHYGHSVCVT…KKNGVNCVVR (233 aa)) folds into the Radical SAM core domain. Residues C104 and C340 are joined by a disulfide bond. Residues C111, C115, and C118 each contribute to the [4Fe-4S] cluster site. Residues 163–164 (GE), S195, 218–220 (SLH), and N296 contribute to the S-adenosyl-L-methionine site. The active-site S-methylcysteine intermediate is the C340.

This sequence belongs to the radical SAM superfamily. RlmN family. [4Fe-4S] cluster is required as a cofactor.

It localises to the cytoplasm. It carries out the reaction adenosine(2503) in 23S rRNA + 2 reduced [2Fe-2S]-[ferredoxin] + 2 S-adenosyl-L-methionine = 2-methyladenosine(2503) in 23S rRNA + 5'-deoxyadenosine + L-methionine + 2 oxidized [2Fe-2S]-[ferredoxin] + S-adenosyl-L-homocysteine. The enzyme catalyses adenosine(37) in tRNA + 2 reduced [2Fe-2S]-[ferredoxin] + 2 S-adenosyl-L-methionine = 2-methyladenosine(37) in tRNA + 5'-deoxyadenosine + L-methionine + 2 oxidized [2Fe-2S]-[ferredoxin] + S-adenosyl-L-homocysteine. Its function is as follows. Specifically methylates position 2 of adenine 2503 in 23S rRNA and position 2 of adenine 37 in tRNAs. In Streptococcus pyogenes serotype M2 (strain MGAS10270), this protein is Probable dual-specificity RNA methyltransferase RlmN.